The primary structure comprises 129 residues: Small ribosomal subunit protein uS11 (129 aa).

This sequence belongs to the universal ribosomal protein uS11 family. Part of the 30S ribosomal subunit. Interacts with proteins S7 and S18. Binds to IF-3.

Its function is as follows. Located on the platform of the 30S subunit, it bridges several disparate RNA helices of the 16S rRNA. Forms part of the Shine-Dalgarno cleft in the 70S ribosome. This chain is Small ribosomal subunit protein uS11, found in Erwinia tasmaniensis (strain DSM 17950 / CFBP 7177 / CIP 109463 / NCPPB 4357 / Et1/99).